We begin with the raw amino-acid sequence, 664 residues long: Transketolase 1 (664 aa).

Histidine 26 provides a ligand contact to substrate. Thiamine diphosphate contacts are provided by residues histidine 66 and 114–116 (GPL). Aspartate 155 serves as a coordination point for Mg(2+). Thiamine diphosphate is bound by residues glycine 156 and asparagine 185. Positions 185 and 187 each coordinate Mg(2+). Substrate-binding residues include histidine 260, arginine 357, and serine 384. Histidine 260 contacts thiamine diphosphate. The active-site Proton donor is the glutamate 411. Residue phenylalanine 437 coordinates thiamine diphosphate. Residues histidine 461, aspartate 469, and arginine 520 each coordinate substrate.

The protein belongs to the transketolase family. In terms of assembly, homodimer. The cofactor is Mg(2+). Ca(2+) is required as a cofactor. Requires Mn(2+) as cofactor. Co(2+) serves as cofactor. It depends on thiamine diphosphate as a cofactor.

The catalysed reaction is D-sedoheptulose 7-phosphate + D-glyceraldehyde 3-phosphate = aldehydo-D-ribose 5-phosphate + D-xylulose 5-phosphate. Catalyzes the transfer of a two-carbon ketol group from a ketose donor to an aldose acceptor, via a covalent intermediate with the cofactor thiamine pyrophosphate. The polypeptide is Transketolase 1 (tkt1) (Aliivibrio fischeri (strain ATCC 700601 / ES114) (Vibrio fischeri)).